Consider the following 356-residue polypeptide: MSGKELRYGFTTGACAAAAVKAAAQMLRDQAMVREVELMLPCGIGANFQVHGGVLRDNTASCYVVKDAGDDPDVTNGAEIHVTASIEFFTKNEIKIEGGTGIGRVTKPGLAVPVGAWAINPVPRSMILEVVKEVFALRCIPATLTFSISIPNGEELAKRTLNERLGIVGGLSILGTTGIVKPISAKAWTDTVDASVDVALACGARTVVLATGRSSEIVAQKHLSLSEEAFVMMGDHFGYAMRSCASKGVPEVVVAGQFAKLVKIACGHEQTHVTSSQMDLDALAWWLREVPATAHLEQMAREANTARHLLEASGYNKALIELVCSRVLKVCADVAPWMKARVMLAGYHGDLLYFSP.

It belongs to the CbiD family.

It carries out the reaction Co-precorrin-5B + S-adenosyl-L-methionine = Co-precorrin-6A + S-adenosyl-L-homocysteine. Its pathway is cofactor biosynthesis; adenosylcobalamin biosynthesis; cob(II)yrinate a,c-diamide from sirohydrochlorin (anaerobic route): step 6/10. Catalyzes the methylation of C-1 in cobalt-precorrin-5B to form cobalt-precorrin-6A. This Geobacter sp. (strain M21) protein is Cobalt-precorrin-5B C(1)-methyltransferase.